Consider the following 140-residue polypeptide: MPTINQLVRKGRKSKVVKSDSPALNKGYNSFIKSQTNVSSPQKRGVCTRVGTMTPKKPNSALRKYARVRLTNQIEVTAYIPGIGHNLQEHSVVLIRGGRVKDLPGVRYHIVRGALDTAGVDGRMQGRSKYGTKRPKAAKK.

Disordered stretches follow at residues 1–20 (MPTINQLVRKGRKSKVVKSD) and 35–55 (QTNVSSPQKRGVCTRVGTMTP). At D102 the chain carries 3-methylthioaspartic acid. The segment at 121–140 (DGRMQGRSKYGTKRPKAAKK) is disordered. The segment covering 130 to 140 (YGTKRPKAAKK) has biased composition (basic residues).

Belongs to the universal ribosomal protein uS12 family. In terms of assembly, part of the 30S ribosomal subunit. Contacts proteins S8 and S17. May interact with IF1 in the 30S initiation complex.

Functionally, with S4 and S5 plays an important role in translational accuracy. In terms of biological role, interacts with and stabilizes bases of the 16S rRNA that are involved in tRNA selection in the A site and with the mRNA backbone. Located at the interface of the 30S and 50S subunits, it traverses the body of the 30S subunit contacting proteins on the other side and probably holding the rRNA structure together. The combined cluster of proteins S8, S12 and S17 appears to hold together the shoulder and platform of the 30S subunit. In Exiguobacterium sp. (strain ATCC BAA-1283 / AT1b), this protein is Small ribosomal subunit protein uS12.